Reading from the N-terminus, the 253-residue chain is Hydroxyacylglutathione hydrolase (253 aa).

Residues His54, His56, Asp58, His59, His112, Asp131, and His169 each coordinate Zn(2+).

The protein belongs to the metallo-beta-lactamase superfamily. Glyoxalase II family. In terms of assembly, monomer. Zn(2+) serves as cofactor.

The enzyme catalyses an S-(2-hydroxyacyl)glutathione + H2O = a 2-hydroxy carboxylate + glutathione + H(+). It functions in the pathway secondary metabolite metabolism; methylglyoxal degradation; (R)-lactate from methylglyoxal: step 2/2. Its function is as follows. Thiolesterase that catalyzes the hydrolysis of S-D-lactoyl-glutathione to form glutathione and D-lactic acid. The protein is Hydroxyacylglutathione hydrolase of Bartonella tribocorum (strain CIP 105476 / IBS 506).